A 275-amino-acid polypeptide reads, in one-letter code: Large ribosomal subunit protein uL2 (275 aa).

Residues 223–260 (VAMNPVDHPHGGGEGRTSGGRHPVSPWGLPTKGYKTRS) are disordered.

The protein belongs to the universal ribosomal protein uL2 family. Part of the 50S ribosomal subunit. Forms a bridge to the 30S subunit in the 70S ribosome.

One of the primary rRNA binding proteins. Required for association of the 30S and 50S subunits to form the 70S ribosome, for tRNA binding and peptide bond formation. It has been suggested to have peptidyltransferase activity; this is somewhat controversial. Makes several contacts with the 16S rRNA in the 70S ribosome. This is Large ribosomal subunit protein uL2 from Legionella pneumophila (strain Paris).